The following is a 494-amino-acid chain: Uric acid degradation bifunctional protein PucL (494 aa).

An OHCU decarboxylase region spans residues methionine 1–threonine 174. Histidine 68 functions as the Proton donor; for OHCU decarboxylase activity in the catalytic mechanism. Residues proline 69, serine 81–glutamine 85, and phenylalanine 116–valine 120 contribute to the 5-hydroxy-2-oxo-4-ureido-2,5-dihydro-1H-imidazole-5-carboxylate site. The interval methionine 175–alanine 494 is urate oxidase. Lysine 179 (charge relay system; for urate oxidase activity) is an active-site residue. Lysine 190 (charge relay system) is an active-site residue. The active-site Charge relay system; for urate oxidase activity is the threonine 239. The urate site is built by threonine 239, aspartate 240, phenylalanine 349, arginine 366, isoleucine 414, glutamine 415, and asparagine 441.

It in the N-terminal section; belongs to the OHCU decarboxylase family. This sequence in the C-terminal section; belongs to the uricase family.

The enzyme catalyses 5-hydroxy-2-oxo-4-ureido-2,5-dihydro-1H-imidazole-5-carboxylate + H(+) = (S)-allantoin + CO2. It carries out the reaction urate + O2 + H2O = 5-hydroxyisourate + H2O2. It functions in the pathway purine metabolism; urate degradation; (S)-allantoin from urate: step 1/3. Its pathway is purine metabolism; urate degradation; (S)-allantoin from urate: step 3/3. Its function is as follows. Catalyzes two steps in the degradation of uric acid, i.e. the oxidation of uric acid to 5-hydroxyisourate (HIU) and the stereoselective decarboxylation of 2-oxo-4-hydroxy-4-carboxy-5-ureidoimidazoline (OHCU) to (S)-allantoin. The sequence is that of Uric acid degradation bifunctional protein PucL (pucL) from Bacillus subtilis (strain 168).